A 122-amino-acid polypeptide reads, in one-letter code: Large ribosomal subunit protein uL14 (122 aa).

The protein belongs to the universal ribosomal protein uL14 family. As to quaternary structure, part of the 50S ribosomal subunit. Forms a cluster with proteins L3 and L19. In the 70S ribosome, L14 and L19 interact and together make contacts with the 16S rRNA in bridges B5 and B8.

Functionally, binds to 23S rRNA. Forms part of two intersubunit bridges in the 70S ribosome. The sequence is that of Large ribosomal subunit protein uL14 from Francisella tularensis subsp. holarctica (strain LVS).